We begin with the raw amino-acid sequence, 434 residues long: MGSPTWLQGEKSSPNARGQHSPGFCPSGPQPCPKPRGPQPCPKPRGPQPCPKPRGPQPCTPALLWAPHRLEGLSQSQDGLLPTSPCFVSGTEAPTACGPCIDIESGSPHRYEASEESSDSDVELVRPRQVKRRRLLPGTVPASVSVYSNKVNSSLKLPPDNSKALLQMSELHSIRGSEDVESEIVPPVTQQKPPTKELTDSETDETEPPNTERLRTGSPSPPPTPKTPVRRKGRAYNKIREMDARLRDLGTVLSPGQKVTTEENDVIVVGSSPAPELTVKVRRGGKLFRINLAMWDPLEKLAQSMASQLNVEPSRILLLLGDEELNKSQTPKSMNLTVADIIDCVVLSPPDGQEDSDPNEKICIKVQGKEKQSHLSVMVGKVEPLQSLMDQYQAAMGLTKKHKVSFFFEGQKLKGKNTAEELGLESDDIIEVWA.

2 disordered regions span residues 1 to 63 and 176 to 237; these read MGSP…TPAL and GSED…RAYN. A compositionally biased stretch (pro residues) spans 28–59; it reads GPQPCPKPRGPQPCPKPRGPQPCPKPRGPQPC. Positions 228 to 237 are enriched in basic residues; the sequence is PVRRKGRAYN. One can recognise a Ubiquitin-like domain in the interval 275–351; the sequence is PELTVKVRRG…IDCVVLSPPD (77 aa).

It is found in the nucleus. It localises to the cytoplasm. In terms of biological role, regulates the magnitude of NFAT-driven transcription of a specific subset of cytokine genes. The protein is NFATC2-interacting protein (nfatc2ip) of Xenopus tropicalis (Western clawed frog).